Consider the following 402-residue polypeptide: Tryptophan synthase beta chain (402 aa).

An N6-(pyridoxal phosphate)lysine modification is found at lysine 92.

Belongs to the TrpB family. Tetramer of two alpha and two beta chains. It depends on pyridoxal 5'-phosphate as a cofactor.

The catalysed reaction is (1S,2R)-1-C-(indol-3-yl)glycerol 3-phosphate + L-serine = D-glyceraldehyde 3-phosphate + L-tryptophan + H2O. It participates in amino-acid biosynthesis; L-tryptophan biosynthesis; L-tryptophan from chorismate: step 5/5. Its function is as follows. The beta subunit is responsible for the synthesis of L-tryptophan from indole and L-serine. This Staphylococcus epidermidis (strain ATCC 35984 / DSM 28319 / BCRC 17069 / CCUG 31568 / BM 3577 / RP62A) protein is Tryptophan synthase beta chain.